Here is a 424-residue protein sequence, read N- to C-terminus: Tyrosine--tRNA ligase (424 aa).

Y37 lines the L-tyrosine pocket. The 'HIGH' region motif lies at 42-51 (PTADSLHLGH). K144 bears the N6-acetyllysine mark. 2 residues coordinate L-tyrosine: Y175 and Q179. Residues 235 to 239 (KFGKT) carry the 'KMSKS' region motif. Residue K238 coordinates ATP. One can recognise an S4 RNA-binding domain in the interval 357-414 (ADLMQALVDSELQPSRGQARKTIASNAITINGEKQSDPEYFFKEEDRLFGRFTLLRRG).

This sequence belongs to the class-I aminoacyl-tRNA synthetase family. TyrS type 1 subfamily. In terms of assembly, homodimer.

It localises to the cytoplasm. The catalysed reaction is tRNA(Tyr) + L-tyrosine + ATP = L-tyrosyl-tRNA(Tyr) + AMP + diphosphate + H(+). Functionally, catalyzes the attachment of tyrosine to tRNA(Tyr) in a two-step reaction: tyrosine is first activated by ATP to form Tyr-AMP and then transferred to the acceptor end of tRNA(Tyr). The chain is Tyrosine--tRNA ligase from Escherichia coli O8 (strain IAI1).